A 218-amino-acid chain; its full sequence is MVTGISEENDDEETFSAVHSSTPSINSQSYAIPITEEMSSSFHDSISTTSNSSGSFDSDGSNVSDVVEQNEMDNESNVDEDLFLDNDIPQSSNLLPTDAQDPGPIFDVSRYIFDSLKQSIDSADFSEALSLQTKTSAVINSKSLELKQYIDEMKSRLTQLQEKFENGEATSKKIKRDLETSRKNIDYLNAALRVDFPIEFNQAREKILERRLNEDHDC.

The tract at residues 1–65 (MVTGISEEND…FDSDGSNVSD (65 aa)) is disordered. Residues 17–30 (AVHSSTPSINSQSY) show a composition bias toward polar residues. A compositionally biased stretch (low complexity) spans 39-65 (SSSFHDSISTTSNSSGSFDSDGSNVSD). Positions 142–192 (KSLELKQYIDEMKSRLTQLQEKFENGEATSKKIKRDLETSRKNIDYLNAAL) form a coiled coil.

Belongs to the KXD1 family. Component of the biogenesis of lysosome-related organelles complex-1 (BLOC-1) composed of at least BLI1, BLS1, CNL1, KXD1, SNN1 and VAB2.

The protein localises to the endosome. Its function is as follows. Component of the biogenesis of lysosome-related organelles complex-1 (BLOC-1) involved in endosomal cargo sorting. The polypeptide is Biogenesis of lysosome-related organelles complex 1 subunit KXD1 (KXD1) (Saccharomyces cerevisiae (strain AWRI1631) (Baker's yeast)).